The following is a 206-amino-acid chain: Protein-methionine-sulfoxide reductase heme-binding subunit MsrQ (206 aa).

6 helical membrane passes run 14 to 34 (IKPL…WLGA), 45 to 65 (FLTR…LAIT), 82 to 102 (MCGL…VWWD), 118 to 138 (PFIT…ATST), 149 to 169 (WQVL…HFWW), and 179 to 199 (QPLL…AAWW).

The protein belongs to the MsrQ family. Heterodimer of a catalytic subunit (MsrP) and a heme-binding subunit (MsrQ). The cofactor is FMN. Requires heme b as cofactor.

The protein resides in the cell inner membrane. Its function is as follows. Part of the MsrPQ system that repairs oxidized periplasmic proteins containing methionine sulfoxide residues (Met-O), using respiratory chain electrons. Thus protects these proteins from oxidative-stress damage caused by reactive species of oxygen and chlorine generated by the host defense mechanisms. MsrPQ is essential for the maintenance of envelope integrity under bleach stress, rescuing a wide series of structurally unrelated periplasmic proteins from methionine oxidation. MsrQ provides electrons for reduction to the reductase catalytic subunit MsrP, using the quinone pool of the respiratory chain. The sequence is that of Protein-methionine-sulfoxide reductase heme-binding subunit MsrQ from Bordetella bronchiseptica (strain ATCC BAA-588 / NCTC 13252 / RB50) (Alcaligenes bronchisepticus).